We begin with the raw amino-acid sequence, 40 residues long: Photosystem II reaction center protein J (40 aa).

Residues 8–28 (IPLWLIGTVTGIPVIGLIGIF) traverse the membrane as a helical segment.

The protein belongs to the PsbJ family. In terms of assembly, PSII is composed of 1 copy each of membrane proteins PsbA, PsbB, PsbC, PsbD, PsbE, PsbF, PsbH, PsbI, PsbJ, PsbK, PsbL, PsbM, PsbT, PsbX, PsbY, PsbZ, Psb30/Ycf12, at least 3 peripheral proteins of the oxygen-evolving complex and a large number of cofactors. It forms dimeric complexes.

The protein localises to the plastid. It localises to the chloroplast thylakoid membrane. One of the components of the core complex of photosystem II (PSII). PSII is a light-driven water:plastoquinone oxidoreductase that uses light energy to abstract electrons from H(2)O, generating O(2) and a proton gradient subsequently used for ATP formation. It consists of a core antenna complex that captures photons, and an electron transfer chain that converts photonic excitation into a charge separation. The chain is Photosystem II reaction center protein J from Vitis vinifera (Grape).